Reading from the N-terminus, the 471-residue chain is 4-aminobutyrate aminotransferase (471 aa).

Position 135-136 (135-136 (GA)) interacts with pyridoxal 5'-phosphate. Arginine 192 serves as a coordination point for substrate. Residue lysine 326 is modified to N6-(pyridoxal phosphate)lysine. Pyridoxal 5'-phosphate is bound at residue threonine 351.

The protein belongs to the class-III pyridoxal-phosphate-dependent aminotransferase family. In terms of assembly, homodimer and homotetramer. The cofactor is pyridoxal 5'-phosphate.

The protein resides in the cytoplasm. The enzyme catalyses 4-aminobutanoate + 2-oxoglutarate = succinate semialdehyde + L-glutamate. Functionally, required for the degradation of gamma-aminobutyric acid (GABA), which is important for utilization of GABA as nitrogen source and for oxidative stress tolerance. Deaminates GABA to succinate semialdehyde, which in turn is converted to succinate by the succinate-semialdehyde dehydrogenase UGA2. Cannot transaminate beta-alanine (BAL). This is 4-aminobutyrate aminotransferase (UGA1) from Saccharomyces cerevisiae (strain ATCC 204508 / S288c) (Baker's yeast).